An 89-amino-acid chain; its full sequence is Small ribosomal subunit protein uS15 (89 aa).

It belongs to the universal ribosomal protein uS15 family. In terms of assembly, part of the 30S ribosomal subunit. Forms a bridge to the 50S subunit in the 70S ribosome, contacting the 23S rRNA.

In terms of biological role, one of the primary rRNA binding proteins, it binds directly to 16S rRNA where it helps nucleate assembly of the platform of the 30S subunit by binding and bridging several RNA helices of the 16S rRNA. Functionally, forms an intersubunit bridge (bridge B4) with the 23S rRNA of the 50S subunit in the ribosome. The chain is Small ribosomal subunit protein uS15 from Frankia alni (strain DSM 45986 / CECT 9034 / ACN14a).